We begin with the raw amino-acid sequence, 303 residues long: N-acetyl-D-glucosamine kinase (303 aa).

Residues 4-11 (GFDIGGTK) and 133-140 (GVGGGLIF) contribute to the ATP site. Residues H157, C177, C179, and C184 each contribute to the Zn(2+) site.

The protein belongs to the ROK (NagC/XylR) family. NagK subfamily.

The enzyme catalyses N-acetyl-D-glucosamine + ATP = N-acetyl-D-glucosamine 6-phosphate + ADP + H(+). It functions in the pathway cell wall biogenesis; peptidoglycan recycling. Its function is as follows. Catalyzes the phosphorylation of N-acetyl-D-glucosamine (GlcNAc) derived from cell-wall degradation, yielding GlcNAc-6-P. In Escherichia coli O9:H4 (strain HS), this protein is N-acetyl-D-glucosamine kinase.